A 1430-amino-acid polypeptide reads, in one-letter code: MGLDFDAVEYCKGVKTQQSQPPFACPVRGCDRSYKTIMGLQYHLMKYDHDNPQPLTPVLTPSRKKARSRSGGHHSTPRPHKDHPTPGGGGAEARNGCSSASAGGGSASGVSARQYANPESLVSYNEEEATVTFNLDGKSVRLGIDDALPLVEDEEFAALVARGCILNADAPPLEENAPWARVQVPVARVAEIPDYRVSDAPPRPLAYYRFIEKSLEELDGEVEYDVDEEDSAWLEHMNEERQRLGLNAVGIDTMELLMDRLEKESHFQAAANGTPTGVEVDDDAVCCICLDGECQNTNVILFCDMCNLAVHQDCYGVPYIPEGQWLCRRCLQSPSKPVNCVLCPNAGGAFKQTDHGQWAHVVCALWIPEVRFANTVFLEPIDSIETIPPARWRLTCYVCKEKGLGACIQCHRNSCYAAFHVTCAQQAGLYMTMDTVKDGHNDSSMHVQKFAYCHAHTPADAKLKMNVPDFEDTRHKMKEARKALAKKRSTAPVVLIPTIPPDRVQEIATMVTMQRKKEFLDRIIAYWTLKRHYRNGVPLLRRLQSQGNNHGVIQRNGIEGSPDTGELYRQLKYWQCLRQDLERARLLCELVRKREKLKVAFVRISEEVVMLQLNPLEAALNKLLDALEARDSMQIFREPVDTSEVPDYTDIVKQPMDLGTMRAKLKECQYNSLEQLEADFDLMIQNCLAYNNKDTVFYRAGIRMRDQAAPLFVQVRKELQRDGLLARSQRYHVDHVEAEVEQELRLLLAAPASEGIVQKLLILADKSQVLKNPTYRTKKIKQIRLEISRMRKSLQKARFAARHSSHANQSQSDDEDTLGGSPSKKRTRKRFNSSGVDMELGHDDDDEEEDSDEDSMGEDTVSKDLLNSTQTPPCSPIKSLNNSSSPVGINRRTAILLTRKAQAALKRPSEPLTTPVKEEQHNSQSSNTQSTSGSSSSVTTAATAASSGAGTLNHVLSSAPPTASSFALTQNNSSGGGALASGTGIGGSSSAGTAAAASLTSTALAMNSKLSANLPVKSPKRPGRYRRVPEVRHSSSMSPKKSPNPAVTVSQALPMPETLPFERIPDSFRVYRANNQRDVSDSDDAPSQSSSPCSSCSDFSMSGSCSDFDSDEASEGDADGDPDRDGGRSRSEERDSTSQEGTTDAMDMQHASLNNVQGNNGNMAISSSSGGSGGSSSEDDELEERPLSARQNKPMKVGTRGTPTPTTMARAVALSAGRGRGKRRSNLSESTSSTATPPPLRRAGKLRSATPNASPLVNNIKARRNTTAAGSAPLTNNNRSKHSEDSASSERHNNHSHGQKPALEPLQLVWAKCRGYPWYPALILDPKTPKGFVYNGVPLPAPPTDVLALRKNCLDEIVFLVLFFDVKRTWQWLPANKLDILGIDKQLDQQKLVESRKPAERKAVKKAYQDALHYQSQVSDLEGQGPDPIM.

The segment at 23-49 adopts a C2H2-type zinc-finger fold; that stretch reads FACPVRGCDRSYKTIMGLQYHLMKYDH. The tract at residues 51–111 is disordered; the sequence is NPQPLTPVLT…AGGGSASGVS (61 aa). Positions 62 to 81 are enriched in basic residues; the sequence is SRKKARSRSGGHHSTPRPHK. The segment at 283–333 adopts a PHD-type 1 zinc-finger fold; the sequence is DAVCCICLDGECQNTNVILFCDMCNLAVHQDCYGVPYIPEGQWLCRRCLQS. Residues C286, C289, C303, C306, H311, C314, C327, and C330 each contribute to the Zn(2+) site. The C2HC pre-PHD-type zinc-finger motif lies at 337-370; sequence PVNCVLCPNAGGAFKQTDHGQWAHVVCALWIPEV. Residues 394–457 form a PHD-type 2 zinc finger; the sequence is LTCYVCKEKG…QKFAYCHAHT (64 aa). Positions 611–715 constitute a Bromo domain; sequence LQLNPLEAAL…DQAAPLFVQV (105 aa). Over residues 796 to 805 the composition is skewed to basic residues; the sequence is KARFAARHSS. Disordered regions lie at residues 796–887, 901–942, 1012–1054, and 1076–1301; these read KARF…SSPV, AQAA…TTAA, ANLP…QALP, and QRDV…GQKP. Over residues 842-857 the composition is skewed to acidic residues; it reads HDDDDEEEDSDEDSMG. Residues 865–887 are compositionally biased toward polar residues; sequence LLNSTQTPPCSPIKSLNNSSSPV. 3 stretches are compositionally biased toward low complexity: residues 922-942, 1034-1043, and 1085-1107; these read NSQSSNTQSTSGSSSSVTTAA, SSSMSPKKSP, and APSQSSSPCSSCSDFSMSGSCSD. Over residues 1108–1120 the composition is skewed to acidic residues; sequence FDSDEASEGDADG. Over residues 1121 to 1137 the composition is skewed to basic and acidic residues; that stretch reads DPDRDGGRSRSEERDST. 2 stretches are compositionally biased toward polar residues: residues 1151–1165 and 1265–1278; these read ASLNNVQGNNGNMAI and NTTAAGSAPLTNNN. Residues 1281–1293 are compositionally biased toward basic and acidic residues; that stretch reads KHSEDSASSERHN. Residues 1305 to 1378 enclose the PWWP domain; that stretch reads PLQLVWAKCR…TWQWLPANKL (74 aa).

As to quaternary structure, component of the Enok complex composed of at least Br140, enok, Eaf6 and Ing5. As part of the Enok complex, interacts with elg1 and the Elg1 RFC-like complex.

Its subcellular location is the nucleus. Scaffold subunit of the histone acetyltransferase (HAT) Enok complex which has histone H3 acetyltransferase activity. As part of the Enok complex, associates with the Elg1 RFC-like complex and down-regulates its PCNA-unloading function to promote the G1/S transition. May also play a role in maintaining the protein levels and stability of enok. The polypeptide is Bromodomain-containing protein homolog (Drosophila melanogaster (Fruit fly)).